The primary structure comprises 235 residues: Sugar fermentation stimulation protein homolog (235 aa).

It belongs to the SfsA family.

This chain is Sugar fermentation stimulation protein homolog, found in Aliivibrio fischeri (strain ATCC 700601 / ES114) (Vibrio fischeri).